The chain runs to 279 residues: 3-methyl-2-oxobutanoate hydroxymethyltransferase (279 aa).

Positions 49 and 88 each coordinate Mg(2+). 3-methyl-2-oxobutanoate-binding positions include 49-50 (DS), Asp88, and Lys118. Glu120 serves as a coordination point for Mg(2+). Glu187 acts as the Proton acceptor in catalysis.

It belongs to the PanB family. Homodecamer; pentamer of dimers. Requires Mg(2+) as cofactor.

It is found in the cytoplasm. It carries out the reaction 3-methyl-2-oxobutanoate + (6R)-5,10-methylene-5,6,7,8-tetrahydrofolate + H2O = 2-dehydropantoate + (6S)-5,6,7,8-tetrahydrofolate. It functions in the pathway cofactor biosynthesis; (R)-pantothenate biosynthesis; (R)-pantoate from 3-methyl-2-oxobutanoate: step 1/2. In terms of biological role, catalyzes the reversible reaction in which hydroxymethyl group from 5,10-methylenetetrahydrofolate is transferred onto alpha-ketoisovalerate to form ketopantoate. This Agrobacterium fabrum (strain C58 / ATCC 33970) (Agrobacterium tumefaciens (strain C58)) protein is 3-methyl-2-oxobutanoate hydroxymethyltransferase.